A 470-amino-acid polypeptide reads, in one-letter code: Sulfate adenylyltransferase subunit 1 (470 aa).

Positions 22 to 238 constitute a tr-type G domain; the sequence is KELLRFITCG…ETIKIDYAYT (217 aa). The segment at 31 to 38 is G1; it reads GSVDDGKS. 31-38 serves as a coordination point for GTP; the sequence is GSVDDGKS. Residues 89-93 are G2; it reads GITID. Residues 110-113 are G3; that stretch reads DTPG. Residues 110 to 114 and 165 to 168 each bind GTP; these read DTPGH and NKMD. The tract at residues 165 to 168 is G4; the sequence is NKMD. Residues 202 to 204 are G5; the sequence is SAL.

It belongs to the TRAFAC class translation factor GTPase superfamily. Classic translation factor GTPase family. CysN/NodQ subfamily. In terms of assembly, heterodimer composed of CysD, the smaller subunit, and CysN.

The catalysed reaction is sulfate + ATP + H(+) = adenosine 5'-phosphosulfate + diphosphate. Its pathway is sulfur metabolism; hydrogen sulfide biosynthesis; sulfite from sulfate: step 1/3. Functionally, with CysD forms the ATP sulfurylase (ATPS) that catalyzes the adenylation of sulfate producing adenosine 5'-phosphosulfate (APS) and diphosphate, the first enzymatic step in sulfur assimilation pathway. APS synthesis involves the formation of a high-energy phosphoric-sulfuric acid anhydride bond driven by GTP hydrolysis by CysN coupled to ATP hydrolysis by CysD. This chain is Sulfate adenylyltransferase subunit 1, found in Francisella tularensis subsp. tularensis (strain WY96-3418).